The primary structure comprises 312 residues: DnaJ homolog subfamily B member 7 (312 aa).

Positions 3–69 constitute a J domain; it reads DYYEVLGVQR…EKRDIYDKYG (67 aa). Residues 272-312 form a disordered region; that stretch reads SWVTNKKEPSIFSAGFKEGGRRKKKKHKEGQKKKKSNKRNH. The span at 291-312 shows a compositional bias: basic residues; it reads GRRKKKKHKEGQKKKKSNKRNH.

In terms of biological role, probably acts as a co-chaperone. This chain is DnaJ homolog subfamily B member 7 (Dnajb7), found in Mus musculus (Mouse).